A 109-amino-acid polypeptide reads, in one-letter code: Cytochrome c-550 (109 aa).

Residues cysteine 13, cysteine 16, histidine 17, and methionine 79 each coordinate heme c.

In terms of processing, binds 1 heme c group covalently per subunit.

The sequence is that of Cytochrome c-550 from Nitrobacter winogradskyi (Nitrobacter agilis).